The primary structure comprises 660 residues: Bifunctional polymyxin resistance protein ArnA (660 aa).

Residues 1 to 304 (MKTVVFAYHD…TLGLVQGSRL (304 aa)) form a formyltransferase ArnAFT region. 86–88 (HLI) lines the (6R)-10-formyltetrahydrofolate pocket. The Proton donor; for formyltransferase activity role is filled by histidine 104. Residues arginine 114 and 136 to 140 (VTRAD) each bind (6R)-10-formyltetrahydrofolate. Residues 314-660 (RRTRVLILGV…RTVDLTDKPS (347 aa)) are dehydrogenase ArnADH. NAD(+) is bound by residues aspartate 347 and 368-369 (DI). UDP-alpha-D-glucuronate contacts are provided by residues alanine 393, tyrosine 398, and 432-433 (TS). Catalysis depends on glutamate 434, which acts as the Proton acceptor; for decarboxylase activity. UDP-alpha-D-glucuronate is bound by residues arginine 460, asparagine 492, 526 to 535 (KLIDGGKQKR), and tyrosine 613. Arginine 619 serves as the catalytic Proton donor; for decarboxylase activity.

This sequence in the N-terminal section; belongs to the Fmt family. UDP-L-Ara4N formyltransferase subfamily. It in the C-terminal section; belongs to the NAD(P)-dependent epimerase/dehydratase family. UDP-glucuronic acid decarboxylase subfamily. In terms of assembly, homohexamer, formed by a dimer of trimers.

The enzyme catalyses UDP-alpha-D-glucuronate + NAD(+) = UDP-beta-L-threo-pentopyranos-4-ulose + CO2 + NADH. It carries out the reaction UDP-4-amino-4-deoxy-beta-L-arabinose + (6R)-10-formyltetrahydrofolate = UDP-4-deoxy-4-formamido-beta-L-arabinose + (6S)-5,6,7,8-tetrahydrofolate + H(+). The protein operates within nucleotide-sugar biosynthesis; UDP-4-deoxy-4-formamido-beta-L-arabinose biosynthesis; UDP-4-deoxy-4-formamido-beta-L-arabinose from UDP-alpha-D-glucuronate: step 1/3. It participates in nucleotide-sugar biosynthesis; UDP-4-deoxy-4-formamido-beta-L-arabinose biosynthesis; UDP-4-deoxy-4-formamido-beta-L-arabinose from UDP-alpha-D-glucuronate: step 3/3. Its pathway is bacterial outer membrane biogenesis; lipopolysaccharide biosynthesis. Functionally, bifunctional enzyme that catalyzes the oxidative decarboxylation of UDP-glucuronic acid (UDP-GlcUA) to UDP-4-keto-arabinose (UDP-Ara4O) and the addition of a formyl group to UDP-4-amino-4-deoxy-L-arabinose (UDP-L-Ara4N) to form UDP-L-4-formamido-arabinose (UDP-L-Ara4FN). The modified arabinose is attached to lipid A and is required for resistance to polymyxin and cationic antimicrobial peptides. This is Bifunctional polymyxin resistance protein ArnA from Shigella dysenteriae serotype 1 (strain Sd197).